Reading from the N-terminus, the 949-residue chain is Zinc finger CCHC domain-containing protein 14 (949 aa).

Disordered regions lie at residues 25 to 44 (SSLN…PGGA), 59 to 92 (EAPV…LGKH), 200 to 221 (STSS…LSKV), 236 to 262 (AGIP…LPHC), 355 to 457 (KEKS…DKEK), and 739 to 779 (PESS…PQPA). Gly residues predominate over residues 28-43 (NGGGGHGGKGAPGPGG). Positions 61–78 (PVSSVSNSLENALHTSAH) are enriched in polar residues. Positions 200 to 219 (STSSPPQQLQSPSPGNPSLS) are enriched in low complexity. A compositionally biased stretch (basic and acidic residues) spans 395-411 (HAAELRVEVEQPHHQLP). Positions 416 to 425 (SSEYSSSSSS) are enriched in low complexity. A compositionally biased stretch (basic and acidic residues) spans 431–457 (AREESSDSAEENDRRVEIHLESSDKEK). A CCHC-type zinc finger spans residues 906–923 (LSCYNCGATGHRAQDCKQ).

In Homo sapiens (Human), this protein is Zinc finger CCHC domain-containing protein 14 (ZCCHC14).